We begin with the raw amino-acid sequence, 80 residues long: Protein CEBPZOS (80 aa).

Residues 15-32 (GVLVAELVGVFGAYFLFS) form a helical membrane-spanning segment.

Its subcellular location is the mitochondrion membrane. This is Protein CEBPZOS from Homo sapiens (Human).